The primary structure comprises 600 residues: Arginine--tRNA ligase (600 aa).

A 'HIGH' region motif is present at residues 132-142 (ANPTGPLHVGH).

Belongs to the class-I aminoacyl-tRNA synthetase family. Monomer.

Its subcellular location is the cytoplasm. The catalysed reaction is tRNA(Arg) + L-arginine + ATP = L-arginyl-tRNA(Arg) + AMP + diphosphate. The chain is Arginine--tRNA ligase from Ralstonia nicotianae (strain ATCC BAA-1114 / GMI1000) (Ralstonia solanacearum).